The following is an 818-amino-acid chain: Phosphoenolpyruvate synthase (818 aa).

H442 serves as the catalytic Tele-phosphohistidine intermediate. R532, R601, E703, G724, S725, N726, and D727 together coordinate substrate. E703 lines the Mg(2+) pocket. Residue D727 coordinates Mg(2+). C774 (proton donor) is an active-site residue.

This sequence belongs to the PEP-utilizing enzyme family. Requires Mg(2+) as cofactor.

It catalyses the reaction pyruvate + ATP + H2O = phosphoenolpyruvate + AMP + phosphate + 2 H(+). The protein operates within carbohydrate biosynthesis; gluconeogenesis. In terms of biological role, catalyzes the phosphorylation of pyruvate to phosphoenolpyruvate. This Synechocystis sp. (strain ATCC 27184 / PCC 6803 / Kazusa) protein is Phosphoenolpyruvate synthase (ppsA).